The sequence spans 377 residues: Ribosomal RNA large subunit methyltransferase G (377 aa).

It belongs to the methyltransferase superfamily. RlmG family.

The protein localises to the cytoplasm. It carries out the reaction guanosine(1835) in 23S rRNA + S-adenosyl-L-methionine = N(2)-methylguanosine(1835) in 23S rRNA + S-adenosyl-L-homocysteine + H(+). Functionally, specifically methylates the guanine in position 1835 (m2G1835) of 23S rRNA. This Shewanella oneidensis (strain ATCC 700550 / JCM 31522 / CIP 106686 / LMG 19005 / NCIMB 14063 / MR-1) protein is Ribosomal RNA large subunit methyltransferase G.